The primary structure comprises 415 residues: Arrestin domain-containing protein 4 (415 aa).

2 consecutive short sequence motifs (PPxY motif) follow at residues 347 to 350 (PPNY) and 392 to 395 (PPLY).

The protein belongs to the arrestin family. As to quaternary structure, interacts with ADRB2. Interacts (via PPxY motifs) with ITCH, NEDD4L and WWP2. Interacts with AVPR2. Identified in a complex containing at least ARRDC4, AVPR2 and HGS. Interacts with SLC11A2; controls the incorporation of SLC11A2 into extracellular vesicles through an ubiquitination-dependent mechanism. Interacts with TRIM65.

It localises to the early endosome. The protein localises to the cell membrane. It is found in the cytoplasmic vesicle. Its function is as follows. Functions as an adapter recruiting ubiquitin-protein ligases to their specific substrates. Plays a role in endocytosis of activated G protein-coupled receptors (GPCRs). Through an ubiquitination-dependent mechanism also plays a role in the incorporation of SLC11A2 into extracellular vesicles. May play a role in glucose uptake. Participates in innate immune response by promoting IFIH1/MDA5 activation through interaction with TRIM65. This chain is Arrestin domain-containing protein 4, found in Mus musculus (Mouse).